The primary structure comprises 359 residues: Peptide chain release factor 1 (359 aa).

Position 234 is an N5-methylglutamine (Q234).

It belongs to the prokaryotic/mitochondrial release factor family. Methylated by PrmC. Methylation increases the termination efficiency of RF1.

The protein resides in the cytoplasm. In terms of biological role, peptide chain release factor 1 directs the termination of translation in response to the peptide chain termination codons UAG and UAA. The sequence is that of Peptide chain release factor 1 from Clavibacter michiganensis subsp. michiganensis (strain NCPPB 382).